We begin with the raw amino-acid sequence, 514 residues long: MNEEQRKAGTINILAERDRKAEKDYSKYFEQVYQPPSLKEAKKRGKQEVQYNRDFHIDEKYKGMGKGRTFLIKTYGCQMNAHDTEVMAGILNALGYSATSDINEADVILINTCAIRENAENKVFSEIGNLKHLKKERPDCLIGVCGCMSQEESVVNKILKSYQNVDMVFGTHNIHHLPEILEEAYLSKAMVVEVWSKEGDIIENLPKVRDGHIKAWVNIMYGCDKFCTYCIVPFTRGKERSRRPEDIIDEVRELAREGYQEITLLGQNVNSYGKDIEGLDYELGDLLEDISKIDIPRVRFTTSHPWDFTDRMIEVIAKGGNIVPHIHLPVQSGNNQVLKIMGRKYTRESYLDLVSRIKEAIPNVALTTDIIVGYPNETEEQFEETLSLYDDVQFEHAYTYLYSQRDGTPAAKMKDNVPLEVKKERLQRLNKKVGIYSQQAMSQYEGKIVTVLCEGSSKKDENVLAGYTDKNKLVNFKGPRESIGKLVDVKIDEAKQYSLNGTFIQEHQRSMVTQ.

Residues 68 to 186 (RTFLIKTYGC…LPEILEEAYL (119 aa)) form the MTTase N-terminal domain. Residues C77, C113, C147, C223, C227, and C230 each coordinate [4Fe-4S] cluster. The Radical SAM core domain maps to 209-439 (RDGHIKAWVN…NKKVGIYSQQ (231 aa)). The TRAM domain occupies 442–505 (SQYEGKIVTV…QYSLNGTFIQ (64 aa)).

The protein belongs to the methylthiotransferase family. MiaB subfamily. In terms of assembly, monomer. [4Fe-4S] cluster serves as cofactor.

It localises to the cytoplasm. The enzyme catalyses N(6)-dimethylallyladenosine(37) in tRNA + (sulfur carrier)-SH + AH2 + 2 S-adenosyl-L-methionine = 2-methylsulfanyl-N(6)-dimethylallyladenosine(37) in tRNA + (sulfur carrier)-H + 5'-deoxyadenosine + L-methionine + A + S-adenosyl-L-homocysteine + 2 H(+). Catalyzes the methylthiolation of N6-(dimethylallyl)adenosine (i(6)A), leading to the formation of 2-methylthio-N6-(dimethylallyl)adenosine (ms(2)i(6)A) at position 37 in tRNAs that read codons beginning with uridine. This is tRNA-2-methylthio-N(6)-dimethylallyladenosine synthase from Staphylococcus epidermidis (strain ATCC 35984 / DSM 28319 / BCRC 17069 / CCUG 31568 / BM 3577 / RP62A).